The following is a 139-amino-acid chain: Small ribosomal subunit protein bS16 (139 aa).

The tract at residues 85-108 (ESKSGKKPAKKATTKEASAKKPTD) is disordered. Over residues 97–108 (TTKEASAKKPTD) the composition is skewed to basic and acidic residues.

The protein belongs to the bacterial ribosomal protein bS16 family.

In Leuconostoc mesenteroides subsp. mesenteroides (strain ATCC 8293 / DSM 20343 / BCRC 11652 / CCM 1803 / JCM 6124 / NCDO 523 / NBRC 100496 / NCIMB 8023 / NCTC 12954 / NRRL B-1118 / 37Y), this protein is Small ribosomal subunit protein bS16.